A 42-amino-acid polypeptide reads, in one-letter code: Aspartate-semialdehyde dehydrogenase leader peptide (42 aa).

In Streptococcus mutans serotype c (strain ATCC 700610 / UA159), this protein is Aspartate-semialdehyde dehydrogenase leader peptide.